The sequence spans 124 residues: Small ribosomal subunit protein uS12 (124 aa).

Asp89 carries the post-translational modification 3-methylthioaspartic acid.

Belongs to the universal ribosomal protein uS12 family. In terms of assembly, part of the 30S ribosomal subunit. Contacts proteins S8 and S17. May interact with IF1 in the 30S initiation complex.

With S4 and S5 plays an important role in translational accuracy. Functionally, interacts with and stabilizes bases of the 16S rRNA that are involved in tRNA selection in the A site and with the mRNA backbone. Located at the interface of the 30S and 50S subunits, it traverses the body of the 30S subunit contacting proteins on the other side and probably holding the rRNA structure together. The combined cluster of proteins S8, S12 and S17 appears to hold together the shoulder and platform of the 30S subunit. The chain is Small ribosomal subunit protein uS12 from Treponema pallidum subsp. pallidum (strain SS14).